Here is a 457-residue protein sequence, read N- to C-terminus: GTPase Era, mitochondrial (457 aa).

The N-terminal 18 residues, M1–R18, are a transit peptide targeting the mitochondrion. An Era-type G domain is found at K107–G350. The G1 stretch occupies residues G115–S122. Position 115 to 122 (G115 to S122) interacts with GTP. The tract at residues H141–A145 is G2. The interval D162–G165 is G3. GTP contacts are provided by residues D162–L166 and N231–D234. Residues N231 to D234 are G4. The span at A270–G290 shows a compositional bias: basic and acidic residues. Positions A270–E300 are disordered. Positions V328–A330 are G5. A KH type-2 domain is found at L376–N457.

The protein belongs to the TRAFAC class TrmE-Era-EngA-EngB-Septin-like GTPase superfamily. Era GTPase family.

The protein resides in the mitochondrion matrix. It localises to the mitochondrion inner membrane. In terms of biological role, probable GTPase that plays a role in the mitochondrial ribosomal small subunit assembly. Specifically binds the 12S mitochondrial rRNA (12S mt-rRNA) to a 33 nucleotide section delineating the 3' terminal stem-loop region. May act as a chaperone that protects the 12S mt-rRNA on the 28S mitoribosomal subunit during ribosomal small subunit assembly. This is GTPase Era, mitochondrial (eral1) from Salmo salar (Atlantic salmon).